The sequence spans 565 residues: Thiol:disulfide interchange protein DsbD (565 aa).

Residues 1 to 19 form the signal peptide; that stretch reads MAQRIFTLILLLCSTSVFA. Over 20–162 the chain is Periplasmic; that stretch reads GLFDAPGRSQ…VPQQEQPTAQ (143 aa). Intrachain disulfides connect Cys-122–Cys-128 and Cys-182–Cys-304. The chain crosses the membrane as a helical span at residues 163–183; the sequence is LPFSALWALLIGIGIAFTPCV. The Cytoplasmic portion of the chain corresponds to 184-207; it reads LPMYPLISGIVLGGKQRLSTARAL. Residues 208–228 traverse the membrane as a helical segment; it reads LLTFIYVQGMALTYTALGLVV. At 229-242 the chain is on the periplasmic side; sequence AAAGLQFQAALQHP. The chain crosses the membrane as a helical span at residues 243–263; it reads YVLIGLTIVFTLLAMSMFGLL. Residues 264-295 lie on the Cytoplasmic side of the membrane; sequence TLQLPSSLQTRLTLMSNRQQGGSPGGVFIMGT. Residues 296-316 form a helical membrane-spanning segment; it reads IAGLICSPCTTAPLSAILLYI. The Periplasmic portion of the chain corresponds to 317–322; sequence AQSGNM. The chain crosses the membrane as a helical span at residues 323–343; that stretch reads WLGGGTLYLYALGMGLPLMLI. Topologically, residues 344-356 are cytoplasmic; the sequence is TVFGNRLLPKSGP. A helical transmembrane segment spans residues 357–377; it reads WMEQVKTAFGFVILALPVFLL. Over 378 to 383 the chain is Periplasmic; it reads ERVIGD. The chain crosses the membrane as a helical span at residues 384-404; that stretch reads VWGLRLWSALGVAFFGWAFIT. Over 405 to 417 the chain is Cytoplasmic; the sequence is SLQAKRGWMRVVQ. The chain crosses the membrane as a helical span at residues 418–438; it reads IILLAAALVSVRPLQDWAFGA. The Thioredoxin domain occupies 434-565; the sequence is WAFGATHTAQ…FSAHLRDRQP (132 aa). Over 439–565 the chain is Periplasmic; it reads THTAQTQTHL…FSAHLRDRQP (127 aa). A disulfide bridge connects residues Cys-480 and Cys-483.

This sequence belongs to the thioredoxin family. DsbD subfamily.

It localises to the cell inner membrane. It catalyses the reaction [protein]-dithiol + NAD(+) = [protein]-disulfide + NADH + H(+). The catalysed reaction is [protein]-dithiol + NADP(+) = [protein]-disulfide + NADPH + H(+). Functionally, required to facilitate the formation of correct disulfide bonds in some periplasmic proteins and for the assembly of the periplasmic c-type cytochromes. Acts by transferring electrons from cytoplasmic thioredoxin to the periplasm. This transfer involves a cascade of disulfide bond formation and reduction steps. The polypeptide is Thiol:disulfide interchange protein DsbD (Escherichia coli O157:H7).